A 264-amino-acid polypeptide reads, in one-letter code: Indole-3-glycerol phosphate synthase (264 aa).

The protein belongs to the TrpC family.

It carries out the reaction 1-(2-carboxyphenylamino)-1-deoxy-D-ribulose 5-phosphate + H(+) = (1S,2R)-1-C-(indol-3-yl)glycerol 3-phosphate + CO2 + H2O. Its pathway is amino-acid biosynthesis; L-tryptophan biosynthesis; L-tryptophan from chorismate: step 4/5. This Polaromonas sp. (strain JS666 / ATCC BAA-500) protein is Indole-3-glycerol phosphate synthase.